Here is a 62-residue protein sequence, read N- to C-terminus: Cytotoxin 6 (62 aa).

The N-terminal stretch at 1–2 (YT) is a signal peptide. 4 disulfide bridges follow: Cys-5/Cys-23, Cys-16/Cys-40, Cys-44/Cys-55, and Cys-56/Cys-61.

It belongs to the three-finger toxin family. Short-chain subfamily. Type IA cytotoxin sub-subfamily. Monomer in solution; Homodimer and oligomer in the presence of negatively charged lipids forming a pore with a size ranging between 20 and 30 Angstroms. As to expression, expressed by the venom gland.

It localises to the secreted. Its subcellular location is the target cell membrane. In terms of biological role, shows cytolytic activity on many different cells by forming pore in lipid membranes. In vivo, increases heart rate or kills the animal by cardiac arrest. In addition, it binds to heparin with high affinity, interacts with Kv channel-interacting protein 1 (KCNIP1) in a calcium-independent manner, and binds to integrin alpha-V/beta-3 (ITGAV/ITGB3) with moderate affinity. This Naja sputatrix (Malayan spitting cobra) protein is Cytotoxin 6.